The chain runs to 512 residues: Kynurenine 3-monooxygenase (512 aa).

The protein belongs to the aromatic-ring hydroxylase family. KMO subfamily. FAD serves as cofactor.

It is found in the mitochondrion outer membrane. The catalysed reaction is L-kynurenine + NADPH + O2 + H(+) = 3-hydroxy-L-kynurenine + NADP(+) + H2O. It functions in the pathway cofactor biosynthesis; NAD(+) biosynthesis; quinolinate from L-kynurenine: step 1/3. Functionally, catalyzes the hydroxylation of L-kynurenine (L-Kyn) to form 3-hydroxy-L-kynurenine (L-3OHKyn). Required for synthesis of quinolinic acid. This chain is Kynurenine 3-monooxygenase (bna4), found in Aspergillus fumigatus (strain ATCC MYA-4609 / CBS 101355 / FGSC A1100 / Af293) (Neosartorya fumigata).